Reading from the N-terminus, the 593-residue chain is Gamma-humulene synthase (593 aa).

Residues 1–26 (MAQISESVSPSTDLKSTESSITSNRH) show a composition bias toward polar residues. Positions 1–34 (MAQISESVSPSTDLKSTESSITSNRHGNMWEDDR) are disordered. Mg(2+) contacts are provided by Asp-343, Asp-347, Asp-488, and Glu-496. Positions 343–347 (DDLYD) match the DDXXD motif motif.

It belongs to the terpene synthase family. Tpsd subfamily. The cofactor is Mg(2+). Requires K(+) as cofactor.

The protein resides in the cytoplasm. The enzyme catalyses (2E,6E)-farnesyl diphosphate = gamma-humulene + diphosphate. It catalyses the reaction (2E,6E)-farnesyl diphosphate = sibirene + diphosphate. It carries out the reaction (2E,6E)-farnesyl diphosphate = longifolene + diphosphate. The catalysed reaction is (2E,6E)-farnesyl diphosphate = beta-himachalene + diphosphate. The enzyme catalyses (2E,6E)-farnesyl diphosphate = gamma-himachalene + diphosphate. It catalyses the reaction (2E,6E)-farnesyl diphosphate = alpha-himachalene + diphosphate. Its pathway is terpene metabolism; oleoresin biosynthesis. Functionally, involved in defensive oleoresin formation in conifers in response to insect attack or other injury. Involved in 52 sesquiterpene (C15) olefins biosynthesis. This is Gamma-humulene synthase (ag5) from Abies grandis (Grand fir).